The sequence spans 156 residues: MQAAKTQDELVKTFKAILKEERFGSQSEIVIALQAEGYNNINQSKVSRMLSKFGAVRTRNAKQEMVYCLPAELGVPTAGSPLKNLVLDVDHNQAMIVVRTSPGAAQLIARLLDSIGKPEGILGTIAGDDTIFITPSNIQEIDKTLITVKSLFNFTN.

The protein belongs to the ArgR family.

It is found in the cytoplasm. It participates in amino-acid biosynthesis; L-arginine biosynthesis [regulation]. Its function is as follows. Regulates arginine biosynthesis genes. The chain is Arginine repressor from Shewanella woodyi (strain ATCC 51908 / MS32).